A 432-amino-acid polypeptide reads, in one-letter code: Septin-11 (432 aa).

Alanine 2 carries the N-acetylalanine modification. Serine 9 is subject to Phosphoserine. Residues 38–304 enclose the Septin-type G domain; that stretch reads QGFCFNILCV…ELYRRCKLEE (267 aa). The tract at residues 48-55 is G1 motif; the sequence is GETGIGKS. GTP is bound by residues 48 to 55, glycine 103, 184 to 192, glycine 238, and arginine 253; these read GETGIGKS and KADTIAKNE. A G3 motif region spans residues 100–103; it reads DTVG. The segment at 183-186 is G4 motif; it reads AKAD. Residues 320 to 413 adopt a coiled-coil conformation; it reads QETYEAKRNE…LLQSQAQQSG (94 aa). A compositionally biased stretch (low complexity) spans 403–416; the sequence is QLLQSQAQQSGAQQ. Residues 403–432 form a disordered region; the sequence is QLLQSQAQQSGAQQTKKDKDKKNSPWLCTE.

Belongs to the TRAFAC class TrmE-Era-EngA-EngB-Septin-like GTPase superfamily. Septin GTPase family. In terms of assembly, septins polymerize into heterooligomeric protein complexes that form filaments, and can associate with cellular membranes, actin filaments and microtubules. Forms homooligomers. GTPase activity is required for filament formation. Interacts with SEPTIN7, SEPTIN9 and SEPTIN12.

The protein resides in the cytoplasm. Its subcellular location is the cytoskeleton. It is found in the synapse. The protein localises to the cell projection. It localises to the dendritic spine. The protein resides in the axon. In terms of biological role, filament-forming cytoskeletal GTPase. May play a role in cytokinesis (Potential). May play a role in the cytoarchitecture of neurons, including dendritic arborization and dendritic spines, and in GABAergic synaptic connectivity. This is Septin-11 from Macaca fascicularis (Crab-eating macaque).